Consider the following 417-residue polypeptide: Aromatic-amino-acid aminotransferase 1 (417 aa).

Lys-258 carries the N6-(pyridoxal phosphate)lysine modification.

This sequence belongs to the class-I pyridoxal-phosphate-dependent aminotransferase family. Homodimer. It depends on pyridoxal 5'-phosphate as a cofactor.

The enzyme catalyses an aromatic L-alpha-amino acid + 2-oxoglutarate = an aromatic oxo-acid + L-glutamate. In terms of biological role, catalyzes the transamination of phenylalanine, tyrosine and tryptophan. Shows virtually no activity towards aspartic acid, alanine, valine or isoleucine. The chain is Aromatic-amino-acid aminotransferase 1 from Thermococcus litoralis (strain ATCC 51850 / DSM 5473 / JCM 8560 / NS-C).